The following is a 211-amino-acid chain: NADH-quinone oxidoreductase subunit I (211 aa).

Positions 21–41 (PTTEQYPEQKKETAPRFHGRH) are disordered. 4Fe-4S ferredoxin-type domains are found at residues 43-73 (LNRH…VEGA) and 89-118 (RVYQ…MSND). 8 residues coordinate [4Fe-4S] cluster: cysteine 53, cysteine 56, cysteine 59, cysteine 63, cysteine 98, cysteine 101, cysteine 104, and cysteine 108. Residues 141-211 (RAGMESPPHP…AHGAGSERPR (71 aa)) are disordered. Positions 152–166 (RLGESETDYYTRDPD) are enriched in basic and acidic residues. A compositionally biased stretch (acidic residues) spans 179–191 (DEADEAGEAGEAG). Residues 192–211 (EAERAADKVPAHGAGSERPR) are compositionally biased toward basic and acidic residues.

Belongs to the complex I 23 kDa subunit family. In terms of assembly, NDH-1 is composed of 14 different subunits. Subunits NuoA, H, J, K, L, M, N constitute the membrane sector of the complex. [4Fe-4S] cluster serves as cofactor.

It localises to the cell membrane. The catalysed reaction is a quinone + NADH + 5 H(+)(in) = a quinol + NAD(+) + 4 H(+)(out). NDH-1 shuttles electrons from NADH, via FMN and iron-sulfur (Fe-S) centers, to quinones in the respiratory chain. The immediate electron acceptor for the enzyme in this species is believed to be ubiquinone. Couples the redox reaction to proton translocation (for every two electrons transferred, four hydrogen ions are translocated across the cytoplasmic membrane), and thus conserves the redox energy in a proton gradient. This Parafrankia sp. (strain EAN1pec) protein is NADH-quinone oxidoreductase subunit I.